A 346-amino-acid polypeptide reads, in one-letter code: NADH-quinone oxidoreductase subunit H (346 aa).

The next 8 helical transmembrane spans lie at 6 to 26 (ILFW…ACAY), 76 to 96 (IMYL…WSVV), 128 to 148 (ILFL…AGWA), 166 to 186 (ISYE…TGSL), 198 to 218 (LWNI…VAMF), 260 to 280 (ITMS…PFGI), 289 to 309 (LFGL…FVWV), and 324 to 344 (LGWK…SLYI).

The protein belongs to the complex I subunit 1 family. NDH-1 is composed of 14 different subunits. Subunits NuoA, H, J, K, L, M, N constitute the membrane sector of the complex.

The protein localises to the cell inner membrane. It carries out the reaction a quinone + NADH + 5 H(+)(in) = a quinol + NAD(+) + 4 H(+)(out). NDH-1 shuttles electrons from NADH, via FMN and iron-sulfur (Fe-S) centers, to quinones in the respiratory chain. The immediate electron acceptor for the enzyme in this species is believed to be ubiquinone. Couples the redox reaction to proton translocation (for every two electrons transferred, four hydrogen ions are translocated across the cytoplasmic membrane), and thus conserves the redox energy in a proton gradient. This subunit may bind ubiquinone. This Leptospira borgpetersenii serovar Hardjo-bovis (strain JB197) protein is NADH-quinone oxidoreductase subunit H.